A 209-amino-acid chain; its full sequence is Guanylyl cyclase-activating protein 3 (209 aa).

The N-myristoyl glycine moiety is linked to residue Gly-2. The residue at position 3 (Asn-3) is a Deamidated asparagine. EF-hand domains follow at residues Pro-15 to Asn-50, Lys-52 to Glu-87, Lys-88 to Leu-123, and Ser-130 to Leu-165. Asp-65, Asn-67, Asp-69, Glu-76, Asp-101, Asp-103, Asn-105, Ser-107, Glu-112, Asp-143, Asn-145, Asp-147, Glu-149, and Glu-154 together coordinate Ca(2+). Residues Gln-187–Lys-209 are disordered.

In terms of tissue distribution, retina.

Stimulates guanylyl cyclase 1 (GC1) and GC2 when free calcium ions concentration is low and inhibits guanylyl cyclases when free calcium ions concentration is elevated. This Ca(2+)-sensitive regulation of guanylyl cyclase (GC) is a key event in recovery of the dark state of rod photoreceptors following light exposure. This is Guanylyl cyclase-activating protein 3 (GUCA1C) from Homo sapiens (Human).